The following is a 111-amino-acid chain: Ribonuclease P protein component (111 aa).

It belongs to the RnpA family. Consists of a catalytic RNA component (M1 or rnpB) and a protein subunit.

It carries out the reaction Endonucleolytic cleavage of RNA, removing 5'-extranucleotides from tRNA precursor.. Its function is as follows. RNaseP catalyzes the removal of the 5'-leader sequence from pre-tRNA to produce the mature 5'-terminus. It can also cleave other RNA substrates such as 4.5S RNA. The protein component plays an auxiliary but essential role in vivo by binding to the 5'-leader sequence and broadening the substrate specificity of the ribozyme. This Fusobacterium nucleatum subsp. nucleatum (strain ATCC 25586 / DSM 15643 / BCRC 10681 / CIP 101130 / JCM 8532 / KCTC 2640 / LMG 13131 / VPI 4355) protein is Ribonuclease P protein component.